We begin with the raw amino-acid sequence, 186 residues long: Lipid A palmitoyltransferase PagP (186 aa).

Residues 1–25 form the signal peptide; it reads MNVSKYVAIFSFVFIQLISVGKVFA. Catalysis depends on residues H58, D101, and S102.

The protein belongs to the lipid A palmitoyltransferase family. Homodimer.

It localises to the cell outer membrane. The enzyme catalyses lipid A (E. coli) + a 1-hexadecanoyl-2-acyl-sn-glycero-3-phosphocholine = hepta-acyl lipid A (E. coli) + a 2-acyl-sn-glycero-3-phosphocholine. It carries out the reaction lipid IIA + a 1-hexadecanoyl-2-acyl-sn-glycero-3-phosphocholine = lipid IIB + a 2-acyl-sn-glycero-3-phosphocholine. It catalyses the reaction lipid IVA (E. coli) + a 1-hexadecanoyl-2-acyl-sn-glycero-3-phosphocholine = lipid IVB (E. coli) + a 2-acyl-sn-glycero-3-phosphocholine. Inhibited by lauryldimethylamine oxide (LDAO) and dodecylphosphocholine (DPC). Functionally, transfers a palmitate residue from the sn-1 position of a phospholipid to the N-linked hydroxymyristate on the proximal unit of lipid A or its precursors. Phosphatidylglycerol (PtdGro), phosphatidylethanolamine (PtdEtn), phosphatidylserine (PtdSer) and phosphatidic acid (Ptd-OH) are all effective acyl donors. This chain is Lipid A palmitoyltransferase PagP, found in Escherichia coli (strain K12).